We begin with the raw amino-acid sequence, 220 residues long: Putative threonylcarbamoyl-AMP synthase (220 aa).

Positions 17–202 (ARGIASAVAA…TPRILRAGPV (186 aa)) constitute a YrdC-like domain.

The protein belongs to the SUA5 family.

The protein localises to the cytoplasm. The enzyme catalyses L-threonine + hydrogencarbonate + ATP = L-threonylcarbamoyladenylate + diphosphate + H2O. In terms of biological role, required for the formation of a threonylcarbamoyl group on adenosine at position 37 (t(6)A37) in tRNAs that read codons beginning with adenine. Catalyzes the conversion of L-threonine, HCO(3)(-)/CO(2) and ATP to give threonylcarbamoyl-AMP (TC-AMP) as the acyladenylate intermediate, with the release of diphosphate. The polypeptide is Putative threonylcarbamoyl-AMP synthase (Mycobacterium leprae (strain TN)).